Consider the following 148-residue polypeptide: Large ribosomal subunit protein bL9 (148 aa).

Belongs to the bacterial ribosomal protein bL9 family.

Its function is as follows. Binds to the 23S rRNA. This chain is Large ribosomal subunit protein bL9, found in Staphylococcus aureus (strain bovine RF122 / ET3-1).